The following is a 225-amino-acid chain: Protein-L-isoaspartate O-methyltransferase (225 aa).

Residue serine 75 is part of the active site.

This sequence belongs to the methyltransferase superfamily. L-isoaspartyl/D-aspartyl protein methyltransferase family.

Its subcellular location is the cytoplasm. The enzyme catalyses [protein]-L-isoaspartate + S-adenosyl-L-methionine = [protein]-L-isoaspartate alpha-methyl ester + S-adenosyl-L-homocysteine. Functionally, catalyzes the methyl esterification of L-isoaspartyl residues in peptides and proteins that result from spontaneous decomposition of normal L-aspartyl and L-asparaginyl residues. It plays a role in the repair and/or degradation of damaged proteins. The sequence is that of Protein-L-isoaspartate O-methyltransferase from Xanthomonas campestris pv. campestris (strain 8004).